Consider the following 37-residue polypeptide: Cytochrome b6-f complex subunit 5 (37 aa).

A helical transmembrane segment spans residues 5–25 (FLFGIVLGLIPITLTGLFVTA).

The protein belongs to the PetG family. The 4 large subunits of the cytochrome b6-f complex are cytochrome b6, subunit IV (17 kDa polypeptide, PetD), cytochrome f and the Rieske protein, while the 4 small subunits are PetG, PetL, PetM and PetN. The complex functions as a dimer.

It is found in the plastid. The protein resides in the chloroplast thylakoid membrane. In terms of biological role, component of the cytochrome b6-f complex, which mediates electron transfer between photosystem II (PSII) and photosystem I (PSI), cyclic electron flow around PSI, and state transitions. PetG is required for either the stability or assembly of the cytochrome b6-f complex. This is Cytochrome b6-f complex subunit 5 from Phalaenopsis aphrodite subsp. formosana (Moth orchid).